A 961-amino-acid polypeptide reads, in one-letter code: Mitogen-activated protein kinase kinase kinase 13-A (961 aa).

The segment at 88 to 118 (LRDQDEPENTAPQGSSHSGDGGSYSGNEDIR) is disordered. The Protein kinase domain maps to 169–410 (ISELQWLGSG…FRQILMHLDI (242 aa)). ATP-binding positions include 175 to 183 (LGSGAQGAV) and K196. The Proton acceptor role is filled by D280. 2 leucine-zipper regions span residues 434–455 (VKKH…DEEL) and 487–508 (LSAI…EQAV). Residues 458–497 (RRREELRHALDIREHYERKLERANNLYMELSAIMLQLEVR) adopt a coiled-coil conformation. Disordered stretches follow at residues 513-600 (PGTY…SKGS), 615-637 (ALSQ…CSPY), and 799-883 (RRIR…KLDD). A compositionally biased stretch (low complexity) spans 560 to 578 (SAEGSAASASPISGSPKTS). The segment covering 584-596 (NRYRSKPRHRRVN) has biased composition (basic residues). Over residues 810 to 823 (ESSEEEEGEVDSEV) the composition is skewed to acidic residues. An acidic region spans residues 811 to 824 (SSEEEEGEVDSEVE). Polar residues predominate over residues 837 to 851 (KCQSYSTFSSENFSV).

Belongs to the protein kinase superfamily. Ser/Thr protein kinase family.

It is found in the cytoplasm. Its subcellular location is the membrane. The catalysed reaction is L-seryl-[protein] + ATP = O-phospho-L-seryl-[protein] + ADP + H(+). It carries out the reaction L-threonyl-[protein] + ATP = O-phospho-L-threonyl-[protein] + ADP + H(+). Its function is as follows. May have a role in the JNK signaling pathway. This Xenopus laevis (African clawed frog) protein is Mitogen-activated protein kinase kinase kinase 13-A (map3k13-a).